A 592-amino-acid polypeptide reads, in one-letter code: Protein kinase C zeta type (592 aa).

Positions 15-98 constitute a PB1 domain; that stretch reads RVRLKAHYGG…EGLIIHVFPS (84 aa). An interaction with SQSTM1 region spans residues 79 to 145; it reads AFRLARQCRD…KRFNRRAYCG (67 aa). The segment at 130 to 180 adopts a Phorbol-ester/DAG-type zinc-finger fold; it reads GHLFQAKRFNRRAYCGQCSERIWGLARQGYRCINCKLLVHKRCHGLVPLTC. A Protein kinase domain is found at 252 to 518; the sequence is FDLIRVIGRG…FSDIKSHAFF (267 aa). Residues 258-266 and K281 each bind ATP; that span reads IGRGSYAKV. Residue D376 is the Proton acceptor of the active site. At T410 the chain carries Phosphothreonine; by PDPK1 and PI3K. Positions 519 to 590 constitute an AGC-kinase C-terminal domain; it reads RSIDWDLLEK…INPLLLSTEE (72 aa). T560 is subject to Phosphothreonine. At S591 the chain carries Phosphoserine.

Belongs to the protein kinase superfamily. AGC Ser/Thr protein kinase family. PKC subfamily. Forms a ternary complex with SQSTM1 and KCNAB2. Forms another ternary complex with SQSTM1 and GABRR3. Forms a complex with SQSTM1 and MAP2K5. Interacts with PARD6A, PARD6B, PARD6G and SQSTM1. Part of a complex with PARD3, PARD6A or PARD6B or PARD6G and CDC42 or RAC1. Interacts with ADAP1/CENTA1. Forms a ternary complex composed of SQSTM1 and PAWR. Interacts directly with SQSTM1. Interacts with IKBKB. Interacts (via the protein kinase domain) with WWC1. Forms a tripartite complex with WWC1 and DDR1, but predominantly in the absence of collagen. Component of the Par polarity complex, composed of at least phosphorylated PRKCZ, PARD3 and TIAM1. Interacts with PDPK1 (via N-terminal region). Interacts with WDFY2 (via WD repeats 1-3). Interacts with VAMP2. Forms a complex with WDFY2 and VAMP2. Interacts with APPL1. Interacts with WWC1, WWC2 and WWC3. In terms of processing, CDH5 is required for its phosphorylation at Thr-410. Phosphorylated by protein kinase PDPK1; phosphorylation is inhibited by the apoptotic C-terminal cleavage product of PKN2. Phosphorylation at Thr-410 by PI3K activates the kinase. In terms of tissue distribution, expressed in brain, and to a lesser extent in lung, kidney and testis.

It is found in the cytoplasm. The protein localises to the endosome. Its subcellular location is the cell junction. It localises to the membrane. The catalysed reaction is L-seryl-[protein] + ATP = O-phospho-L-seryl-[protein] + ADP + H(+). The enzyme catalyses L-threonyl-[protein] + ATP = O-phospho-L-threonyl-[protein] + ADP + H(+). Atypical PKCs (PRKCI and PRKCZ) exhibit an elevated basal enzymatic activity (that may be due to the interaction with SMG1 or SQSTM1) and are not regulated by diacylglycerol, phosphatidylserine, phorbol esters or calcium ions. Two specific sites, Thr-410 (activation loop of the kinase domain) and Thr-560 (turn motif), need to be phosphorylated for its full activation. Phosphatidylinositol 3,4,5-trisphosphate might be a physiological activator. Isoform 2: Constitutively active. Its function is as follows. Calcium- and diacylglycerol-independent serine/threonine-protein kinase that functions in phosphatidylinositol 3-kinase (PI3K) pathway and mitogen-activated protein (MAP) kinase cascade, and is involved in NF-kappa-B activation, mitogenic signaling, cell proliferation, cell polarity, inflammatory response and maintenance of long-term potentiation (LTP). Upon lipopolysaccharide (LPS) treatment in macrophages, or following mitogenic stimuli, functions downstream of PI3K to activate MAP2K1/MEK1-MAPK1/ERK2 signaling cascade independently of RAF1 activation. Required for insulin-dependent activation of AKT3, but may function as an adapter rather than a direct activator. Upon insulin treatment may act as a downstream effector of PI3K and contribute to the activation of translocation of the glucose transporter SLC2A4/GLUT4 and subsequent glucose transport in adipocytes. In EGF-induced cells, binds and activates MAP2K5/MEK5-MAPK7/ERK5 independently of its kinase activity and can activate JUN promoter through MEF2C. Through binding with SQSTM1/p62, functions in interleukin-1 signaling and activation of NF-kappa-B with the specific adapters RIPK1 and TRAF6. Participates in TNF-dependent transactivation of NF-kappa-B by phosphorylating and activating IKBKB kinase, which in turn leads to the degradation of NF-kappa-B inhibitors. In migrating astrocytes, forms a cytoplasmic complex with PARD6A and is recruited by CDC42 to function in the establishment of cell polarity along with the microtubule motor and dynein. In association with FEZ1, stimulates neuronal differentiation in PC12 cells. In the inflammatory response, is required for the T-helper 2 (Th2) differentiation process, including interleukin production, efficient activation of JAK1 and the subsequent phosphorylation and nuclear translocation of STAT6. May be involved in development of allergic airway inflammation (asthma), a process dependent on Th2 immune response. In the NF-kappa-B-mediated inflammatory response, can relieve SETD6-dependent repression of NF-kappa-B target genes by phosphorylating the RELA subunit at 'Ser-311'. Phosphorylates VAMP2 in vitro. Phosphorylates and activates LRRK1, which phosphorylates RAB proteins involved in intracellular trafficking. In terms of biological role, involved in late synaptic long term potention phase in CA1 hippocampal cells and long term memory maintenance. This is Protein kinase C zeta type (PRKCZ) from Homo sapiens (Human).